The following is a 204-amino-acid chain: MATTSSNVENFSPQIIKQVAREIHGLTNDPPEGIKVFSNDEDITDIQASIEGPTGTPYEGGIFKIKLVLGKDFPAAPPKGFFLTKIFHPNVAKNGEICVNTLKKDWKPDLGIKQVLLTVKCLLIVPNPESALNEEAGKLLLERYDDYSKRAKMFTEIHAKLSASSSNNISEGQQESLPGKKRVAVNEKMCDKKKKDKKRALKRL.

Positions 14–160 (QIIKQVAREI…AKMFTEIHAK (147 aa)) constitute a UBC core domain. Cys-98 (glycyl thioester intermediate) is an active-site residue. Positions 165-176 (SSNNISEGQQES) are enriched in polar residues. The tract at residues 165-204 (SSNNISEGQQESLPGKKRVAVNEKMCDKKKKDKKRALKRL) is disordered. Residues 191–204 (DKKKKDKKRALKRL) show a composition bias toward basic residues.

The protein belongs to the ubiquitin-conjugating enzyme family.

It carries out the reaction S-ubiquitinyl-[E1 ubiquitin-activating enzyme]-L-cysteine + [E2 ubiquitin-conjugating enzyme]-L-cysteine = [E1 ubiquitin-activating enzyme]-L-cysteine + S-ubiquitinyl-[E2 ubiquitin-conjugating enzyme]-L-cysteine.. The protein operates within protein modification; protein ubiquitination. Catalyzes the covalent attachment of ubiquitin to other proteins. Acts as an essential factor of the anaphase promoting complex/cyclosome (APC/C), a cell cycle-regulated ubiquitin ligase that controls progression through mitosis. Acts by specifically elongating polyubiquitin chains initiated by the E2 enzyme UBCH10 on APC/C substrates, enhancing the degradation of APC/C substrates by the proteasome and promoting mitotic exit. The chain is Ubiquitin-conjugating enzyme E2 S from Nematostella vectensis (Starlet sea anemone).